A 347-amino-acid polypeptide reads, in one-letter code: UDP-N-acetylenolpyruvoylglucosamine reductase (347 aa).

One can recognise an FAD-binding PCMH-type domain in the interval 16-187 (AIEQCSHYLV…IAVGLKLPKT (172 aa)). Arginine 163 is an active-site residue. The active-site Proton donor is serine 233. Glutamate 328 is an active-site residue.

Belongs to the MurB family. It depends on FAD as a cofactor.

It is found in the cytoplasm. The enzyme catalyses UDP-N-acetyl-alpha-D-muramate + NADP(+) = UDP-N-acetyl-3-O-(1-carboxyvinyl)-alpha-D-glucosamine + NADPH + H(+). Its pathway is cell wall biogenesis; peptidoglycan biosynthesis. In terms of biological role, cell wall formation. The protein is UDP-N-acetylenolpyruvoylglucosamine reductase of Vibrio vulnificus (strain YJ016).